Consider the following 211-residue polypeptide: 7-carboxy-7-deazaguanine synthase (211 aa).

Substrate-binding positions include L22–G24 and R37. The region spanning N28 to E211 is the Radical SAM core domain. [4Fe-4S] cluster-binding residues include C41, C45, and C48. T50 provides a ligand contact to Mg(2+). T78 contacts substrate. S-adenosyl-L-methionine contacts are provided by residues G80 and S122–K124.

The protein belongs to the radical SAM superfamily. 7-carboxy-7-deazaguanine synthase family. As to quaternary structure, homodimer. The cofactor is [4Fe-4S] cluster. It depends on S-adenosyl-L-methionine as a cofactor. Requires Mg(2+) as cofactor.

It carries out the reaction 6-carboxy-5,6,7,8-tetrahydropterin + H(+) = 7-carboxy-7-deazaguanine + NH4(+). The protein operates within purine metabolism; 7-cyano-7-deazaguanine biosynthesis. Functionally, catalyzes the complex heterocyclic radical-mediated conversion of 6-carboxy-5,6,7,8-tetrahydropterin (CPH4) to 7-carboxy-7-deazaguanine (CDG), a step common to the biosynthetic pathways of all 7-deazapurine-containing compounds. The chain is 7-carboxy-7-deazaguanine synthase from Haemophilus influenzae (strain ATCC 51907 / DSM 11121 / KW20 / Rd).